The chain runs to 326 residues: Cobalamin biosynthesis protein CobD (326 aa).

4 helical membrane passes run 58–78, 81–101, 157–177, and 304–324; these read MRGV…GVVL, LFDV…AVFL, FSDG…PGLL, and VFYR…LPFL.

This sequence belongs to the CobD/CbiB family.

The protein localises to the cell membrane. It participates in cofactor biosynthesis; adenosylcobalamin biosynthesis. Its function is as follows. Converts cobyric acid to cobinamide by the addition of aminopropanol on the F carboxylic group. The sequence is that of Cobalamin biosynthesis protein CobD from Sinorhizobium fredii (strain NBRC 101917 / NGR234).